We begin with the raw amino-acid sequence, 388 residues long: Proline-rich protein 5 (388 aa).

Interaction with RICTOR stretches follow at residues 10-95 and 188-218; these read MSSP…LTKG and HESRGVTEDYLRLETLVQKVVSPYLGTYGLH. The segment at 12–31 is disordered; sequence SPSLSDLGKREPAAAADERG. A compositionally biased stretch (basic and acidic residues) spans 18-31; that stretch reads LGKREPAAAADERG. Ser252 carries the phosphoserine modification. The disordered stretch occupies residues 254 to 388; that stretch reads SYNTPLLNPV…EGSGGRQSVV (135 aa). A compositionally biased stretch (polar residues) spans 336–346; sequence TRSSLPRSSPE.

This sequence belongs to the PROTOR family. In terms of assembly, associated component of the mechanistic target of rapamycin complex 2 (mTORC2). Binds directly to MTOR and RICTOR within the TORC2 complex. As to expression, most abundant in kidney and liver. Also highly expressed in brain, spleen, testis and placenta. Overexpressed in several colorectal tumors.

Its function is as follows. Associated subunit of mTORC2, which regulates cell growth and survival in response to hormonal signals. mTORC2 is activated by growth factors, but, in contrast to mTORC1, seems to be nutrient-insensitive. mTORC2 seems to function upstream of Rho GTPases to regulate the actin cytoskeleton, probably by activating one or more Rho-type guanine nucleotide exchange factors. PRR5 plays an important role in regulation of PDGFRB expression and in modulation of platelet-derived growth factor signaling. May act as a tumor suppressor in breast cancer. The polypeptide is Proline-rich protein 5 (PRR5) (Homo sapiens (Human)).